We begin with the raw amino-acid sequence, 50 residues long: Large ribosomal subunit protein bL33B (50 aa).

This sequence belongs to the bacterial ribosomal protein bL33 family.

The chain is Large ribosomal subunit protein bL33B from Streptococcus pyogenes serotype M1.